The chain runs to 522 residues: 2-isopropylmalate synthase (522 aa).

The 263-residue stretch at 5–267 (VIIFDTTLRD…ETGINAKEIH (263 aa)) folds into the Pyruvate carboxyltransferase domain. Residues aspartate 14, histidine 202, histidine 204, and asparagine 238 each coordinate Mn(2+). The segment at 392 to 522 (QLQQLVVQSD…MQKNRELGGV (131 aa)) is regulatory domain.

This sequence belongs to the alpha-IPM synthase/homocitrate synthase family. LeuA type 1 subfamily. In terms of assembly, homodimer. Mn(2+) serves as cofactor.

The protein resides in the cytoplasm. The enzyme catalyses 3-methyl-2-oxobutanoate + acetyl-CoA + H2O = (2S)-2-isopropylmalate + CoA + H(+). It participates in amino-acid biosynthesis; L-leucine biosynthesis; L-leucine from 3-methyl-2-oxobutanoate: step 1/4. Catalyzes the condensation of the acetyl group of acetyl-CoA with 3-methyl-2-oxobutanoate (2-ketoisovalerate) to form 3-carboxy-3-hydroxy-4-methylpentanoate (2-isopropylmalate). This Shewanella baltica (strain OS155 / ATCC BAA-1091) protein is 2-isopropylmalate synthase.